The following is a 251-amino-acid chain: Ditrans,polycis-undecaprenyl-diphosphate synthase ((2E,6E)-farnesyl-diphosphate specific) (251 aa).

Aspartate 20 is a catalytic residue. Aspartate 20 lines the Mg(2+) pocket. Substrate contacts are provided by residues 21–24 (GNGR), tryptophan 25, arginine 33, histidine 37, and 65–67 (SSE). The Proton acceptor role is filled by asparagine 68. Substrate is bound by residues tryptophan 69, arginine 71, arginine 188, and 194 to 196 (RIS). Residue glutamate 207 coordinates Mg(2+).

It belongs to the UPP synthase family. In terms of assembly, homodimer. Mg(2+) is required as a cofactor.

The catalysed reaction is 8 isopentenyl diphosphate + (2E,6E)-farnesyl diphosphate = di-trans,octa-cis-undecaprenyl diphosphate + 8 diphosphate. In terms of biological role, catalyzes the sequential condensation of isopentenyl diphosphate (IPP) with (2E,6E)-farnesyl diphosphate (E,E-FPP) to yield (2Z,6Z,10Z,14Z,18Z,22Z,26Z,30Z,34E,38E)-undecaprenyl diphosphate (di-trans,octa-cis-UPP). UPP is the precursor of glycosyl carrier lipid in the biosynthesis of bacterial cell wall polysaccharide components such as peptidoglycan and lipopolysaccharide. This is Ditrans,polycis-undecaprenyl-diphosphate synthase ((2E,6E)-farnesyl-diphosphate specific) from Vibrio vulnificus (strain CMCP6).